We begin with the raw amino-acid sequence, 425 residues long: Decarboxylase flvG (425 aa).

N6-(pyridoxal phosphate)lysine is present on Lys82. Residues Ser213, Gly250, and 281–284 each bind pyridoxal 5'-phosphate; that span reads EPGR. Substrate is bound at residue 331–332; sequence FE. Cys365 acts as the Proton donor; shared with dimeric partner in catalysis. Residue Asp366 coordinates substrate. Tyr395 is a binding site for pyridoxal 5'-phosphate.

Belongs to the Orn/Lys/Arg decarboxylase class-II family. In terms of assembly, homodimer. Only the dimer is catalytically active, as the active sites are constructed of residues from both monomers. The cofactor is pyridoxal 5'-phosphate.

The protein resides in the cytoplasm. It catalyses the reaction N(6),N(6)-dimethyl-L-lysine + H(+) = N,N-dimethyl-cadaverine + CO2. The protein operates within secondary metabolite biosynthesis; terpenoid biosynthesis. Its function is as follows. Decarboxylase; part of the gene cluster that mediates the biosynthesis of flavunoidine, an alkaloidal terpenoid with a tetracyclic cage-like core connected to dimethylcadaverine via a C-N bond and acylated with 5,5-dimethyl-L-pipecolate. The tetracyclic core is synthesized by the terpene cyclase flvE and the cytochrome P450 monooxygenase flvD. The terpene cyclase flvE catalyzes the cyclization of farnesyl pyrophosphate (FPP) to form (1R,4R,5S)-(+)-acoradiene and the cytochrome P450 monooxygenase flvD is then responsible for oxidative conversion of (1R,4R,5S)-(+)-acoradiene into the tetracyclic cage present in the final product flavunoidine. In parallel, the N-methyltransferase flvH dimethylates L-lysine to give N,N-dimethyl-L-Lysin which is decarboxylated by flvG to afford dimethylcadaverine. The terpene cyclase-like protein flvF is the enzyme that attaches the dimethylcadaverine precusor at the C-7 of the tetracyclic cage to yield pre-flavunoidine. The cytochrome monooxygenase flvC hydroxylates the C-10 position of pre-flavunoidine whereas the NRPS flvI acylates the terpenoid core at the hydroxylated C-10 with dimethylpipecolate to yield final flavunoidine. The bifunctional enzyme flvA and the dehydrogenase flvB are responsible for the synthesis of the dimethylpipecolate precursor. The PLP-dependent lyase domain of flvA might use L-O-acetyl-homoserine and alpha-keto-isovalerate to form an intermediary ketone that can cyclize intramolecularly to yield an imine. The imine can be reduced by flvB to yield the 6-carboxylated pipecolate. The C-terminal alpha-KG-dependent oxygenase domain of flvA is then proposed to catalyze the decarboxylation to yield dimethylpipecolate. In Aspergillus flavus (strain ATCC 200026 / FGSC A1120 / IAM 13836 / NRRL 3357 / JCM 12722 / SRRC 167), this protein is Decarboxylase flvG.